A 430-amino-acid chain; its full sequence is Tektin-2 (430 aa).

Coiled coils occupy residues 82-160 (LTDL…QAFE) and 273-379 (EKVY…DIAC).

This sequence belongs to the tektin family. Microtubule inner protein component of sperm flagellar doublet microtubules. May interact with CCDC172. Tyrosine phosphorylated. In terms of processing, ubiquitinated, leading to its degradation. Deubiquitinated by USP16, promoting its stability.

Its subcellular location is the cytoplasm. It is found in the cytoskeleton. It localises to the cilium axoneme. The protein localises to the flagellum axoneme. The protein resides in the microtubule organizing center. In terms of biological role, microtubule inner protein (MIP) part of the dynein-decorated doublet microtubules (DMTs) in cilia and flagellar axoneme. Plays a key role in the assembly or attachment of the inner dynein arm to microtubules in sperm flagella and tracheal cilia. Forms filamentous polymers in the walls of ciliary and flagellar microtubules. The protein is Tektin-2 (TEKT2) of Macaca fascicularis (Crab-eating macaque).